Here is a 359-residue protein sequence, read N- to C-terminus: Peptide chain release factor 1 (359 aa).

Position 235 is an N5-methylglutamine (Gln-235). Residues 283–309 (QKAESERSQARRSQVGSGDRSERIRTY) are disordered.

The protein belongs to the prokaryotic/mitochondrial release factor family. Post-translationally, methylated by PrmC. Methylation increases the termination efficiency of RF1.

It localises to the cytoplasm. Peptide chain release factor 1 directs the termination of translation in response to the peptide chain termination codons UAG and UAA. This Brucella melitensis biotype 2 (strain ATCC 23457) protein is Peptide chain release factor 1.